We begin with the raw amino-acid sequence, 96 residues long: Integration host factor subunit beta (96 aa).

Belongs to the bacterial histone-like protein family. In terms of assembly, heterodimer of an alpha and a beta chain.

Its function is as follows. This protein is one of the two subunits of integration host factor, a specific DNA-binding protein that functions in genetic recombination as well as in transcriptional and translational control. The sequence is that of Integration host factor subunit beta from Dichelobacter nodosus (strain VCS1703A).